Here is a 615-residue protein sequence, read N- to C-terminus: Angiotensin-converting enzyme (615 aa).

The N-terminal stretch at 1-17 (MRLFLLALLATLAVTQA) is a signal peptide. The 589-residue stretch at 19–607 (VKEEIQAKEY…IKNNVHIGWT (589 aa)) folds into the Peptidase M2 domain. The N-linked (GlcNAc...) asparagine glycan is linked to asparagine 53. Residues cysteine 133 and cysteine 141 are joined by a disulfide bond. N-linked (GlcNAc...) asparagine glycans are attached at residues asparagine 196 and asparagine 311. Residues cysteine 336 and cysteine 354 are joined by a disulfide bond. Zn(2+) is bound at residue histidine 367. Glutamate 368 (proton acceptor) is an active-site residue. Zn(2+)-binding residues include histidine 371 and glutamate 395. Histidine 497 (proton donor) is an active-site residue. Cysteine 522 and cysteine 540 are joined by a disulfide.

This sequence belongs to the peptidase M2 family. Zn(2+) serves as cofactor. Glycosylated. As to expression, expressed in vesicular structures in spermatocytes and early spermatids (at protein level).

It localises to the secreted. The protein localises to the extracellular space. It catalyses the reaction Release of a C-terminal dipeptide, oligopeptide-|-Xaa-Yaa, when Xaa is not Pro, and Yaa is neither Asp nor Glu. Thus, conversion of angiotensin I to angiotensin II, with increase in vasoconstrictor activity, but no action on angiotensin II.. Inhibited by captopril and, to a lesser extent, by lisinopril, trandolaprilat, fosinoprilat and enalaprilat. In terms of biological role, may be involved in the specific maturation or degradation of a number of bioactive peptides. May play a role in the contractions of the heart, gut and testes, and in spermatid differentiation. The polypeptide is Angiotensin-converting enzyme (Ance) (Drosophila melanogaster (Fruit fly)).